A 713-amino-acid chain; its full sequence is NAD(+) hydrolase SARM1 (713 aa).

An ARM 1 repeat occupies 53–96 (DVQAVLDGSLPALRSAIRTLRSSKDTGDLEETRRAIAETFQLVE). Residues tryptophan 99, arginine 106, 145-153 (EQILVSENR), and 186-189 (HMFK) contribute to the NAD(+) site. 7 ARM repeats span residues 110–149 (EEIC…QILV), 151–189 (ENRD…HMFK), 192–231 (EETS…NCAM), 233–276 (GGHR…LAAN), 277–310 (REME…NMLD), 311–350 (SADS…VETS), and 355–398 (QRNT…EEVP). 2 SAM domains span residues 408 to 472 (WKSG…LKTY) and 478 to 537 (CDPN…ILSA). The region spanning 552-695 (KGPDVFISYR…KILRFLEGCP (144 aa)) is the TIR domain. Residues 561–562 (RR) and glutamate 591 contribute to the NAD(+) site. The active site involves glutamate 634.

Belongs to the SARM1 family. Homooctamer; forms an octameric ring via SAM domains.

It is found in the cytoplasm. It localises to the cell projection. The protein resides in the axon. The protein localises to the dendrite. Its subcellular location is the synapse. It is found in the mitochondrion. It catalyses the reaction NAD(+) + H2O = ADP-D-ribose + nicotinamide + H(+). The enzyme catalyses NAD(+) = cyclic ADP-beta-D-ribose + nicotinamide + H(+). The catalysed reaction is NADP(+) + H2O = ADP-D-ribose 2'-phosphate + nicotinamide + H(+). Its activity is regulated as follows. Autoinhibited: in the inactive state, the enzymatic TIR domain is held apart by the autoinhibiting ARM repeats. NAD(+)-binding to ARM repeats maintains an inactive state by promoting interaction between ARM repeats and the TIR domain, thereby facilitating inhibition of the enzymatic TIR domain. Following activation, possibly by nicotinamide mononucleotide (NMN), auto-inhibitory interactions are released, allowing self-association of the TIR domains and subsequent activation of the NAD(+) hydrolase (NADase) activity. Self-association of TIR domains is facilitated by the octamer of SAM domains. Its function is as follows. NAD(+) hydrolase, which plays a key role in axonal degeneration following injury by regulating NAD(+) metabolism. Acts as a negative regulator of MYD88- and TRIF-dependent toll-like receptor signaling pathway by promoting Wallerian degeneration, an injury-induced form of programmed subcellular death which involves degeneration of an axon distal to the injury site. Wallerian degeneration is triggerred by NAD(+) depletion: in response to injury, SARM1 is activated and catalyzes cleavage of NAD(+) into ADP-D-ribose (ADPR), cyclic ADPR (cADPR) and nicotinamide; NAD(+) cleavage promoting cytoskeletal degradation and axon destruction. Also able to hydrolyze NADP(+), but not other NAD(+)-related molecules. Can activate neuronal cell death in response to stress. This is NAD(+) hydrolase SARM1 from Danio rerio (Zebrafish).